The primary structure comprises 141 residues: Large ribosomal subunit protein bL17 (141 aa).

This sequence belongs to the bacterial ribosomal protein bL17 family. Part of the 50S ribosomal subunit. Contacts protein L32.

This is Large ribosomal subunit protein bL17 from Gluconacetobacter diazotrophicus (strain ATCC 49037 / DSM 5601 / CCUG 37298 / CIP 103539 / LMG 7603 / PAl5).